We begin with the raw amino-acid sequence, 451 residues long: UPF0210 protein lmo0534 (451 aa).

This sequence belongs to the UPF0210 family. As to quaternary structure, homodimer.

The sequence is that of UPF0210 protein lmo0534 from Listeria monocytogenes serovar 1/2a (strain ATCC BAA-679 / EGD-e).